The chain runs to 98 residues: Small ribosomal subunit protein uS19 (98 aa).

Disordered regions lie at residues Met1–Val30 and Arg78–Lys98. Basic and acidic residues predominate over residues Pro9 to Lys24.

The protein belongs to the universal ribosomal protein uS19 family.

Its function is as follows. Protein S19 forms a complex with S13 that binds strongly to the 16S ribosomal RNA. The protein is Small ribosomal subunit protein uS19 of Anaeromyxobacter dehalogenans (strain 2CP-1 / ATCC BAA-258).